The chain runs to 218 residues: Uracil-DNA glycosylase (218 aa).

Aspartate 59 acts as the Proton acceptor in catalysis.

It belongs to the uracil-DNA glycosylase (UDG) superfamily. UNG family.

The protein localises to the cytoplasm. The catalysed reaction is Hydrolyzes single-stranded DNA or mismatched double-stranded DNA and polynucleotides, releasing free uracil.. Functionally, excises uracil residues from the DNA which can arise as a result of misincorporation of dUMP residues by DNA polymerase or due to deamination of cytosine. This Staphylococcus saprophyticus subsp. saprophyticus (strain ATCC 15305 / DSM 20229 / NCIMB 8711 / NCTC 7292 / S-41) protein is Uracil-DNA glycosylase.